A 456-amino-acid polypeptide reads, in one-letter code: Glycine receptor subunit alpha-4 (456 aa).

An N-terminal signal peptide occupies residues 1–27 (MTTLVPASLFLLLWTLPGKVLLSVALA). At 28-256 (KEDVKSGLKG…KFHLERQMGY (229 aa)) the chain is on the extracellular side. An N-linked (GlcNAc...) asparagine glycan is attached at Asn-71. Disulfide bonds link Cys-171-Cys-185 and Cys-232-Cys-243. 236–241 (YNTGKF) serves as a coordination point for strychnine. The helical transmembrane segment at 257–278 (YLIQMYIPSLLIVILSWVSFWI) threads the bilayer. The Cytoplasmic segment spans residues 279–283 (NMDAA). Residues 284 to 304 (PARVGLGITTVLTMTTQSSGS) traverse the membrane as a helical segment. Topologically, residues 305–315 (RASLPKVSYVK) are extracellular. The chain crosses the membrane as a helical span at residues 316–336 (AIDIWMAVCLLFVFAALLEYA). At 337–423 (AVNFVSRQHK…YVDRAKRIDT (87 aa)) the chain is on the cytoplasmic side. The helical transmembrane segment at 424 to 444 (ISRAVFPFTFLVFNIFYWVVY) threads the bilayer. Residues 445–456 (KVLRSEDIHQAL) are Extracellular-facing.

The protein belongs to the ligand-gated ion channel (TC 1.A.9) family. Glycine receptor (TC 1.A.9.3) subfamily. GLRA4 sub-subfamily. Homopentamer (in vitro). Heteropentamer composed of GLRA4 and GLRB. In terms of tissue distribution, detected in the retina inner plexiform layer, especially at the border between layer three and four (at protein level).

It localises to the postsynaptic cell membrane. It is found in the synapse. Its subcellular location is the perikaryon. The protein resides in the cell projection. The protein localises to the dendrite. It localises to the cell membrane. The enzyme catalyses chloride(in) = chloride(out). Inhibited by strychnine. Glycine receptors are ligand-gated chloride channels. Channel opening is triggered by extracellular glycine. Channel opening is also triggered by taurine and beta-alanine. Plays a role in the down-regulation of neuronal excitability. Contributes to the generation of inhibitory postsynaptic currents. The polypeptide is Glycine receptor subunit alpha-4 (Glra4) (Mus musculus (Mouse)).